A 206-amino-acid polypeptide reads, in one-letter code: Large ribosomal subunit protein uL4 (206 aa).

A disordered region spans residues Arg45–Gly76.

It belongs to the universal ribosomal protein uL4 family. As to quaternary structure, part of the 50S ribosomal subunit.

Functionally, one of the primary rRNA binding proteins, this protein initially binds near the 5'-end of the 23S rRNA. It is important during the early stages of 50S assembly. It makes multiple contacts with different domains of the 23S rRNA in the assembled 50S subunit and ribosome. In terms of biological role, forms part of the polypeptide exit tunnel. The chain is Large ribosomal subunit protein uL4 from Clostridium novyi (strain NT).